A 193-amino-acid polypeptide reads, in one-letter code: tRNA(Phe) 7-((3-amino-3-carboxypropyl)-4-demethylwyosine(37)-N(4))-methyltransferase (193 aa).

Belongs to the TYW3 family.

The enzyme catalyses 4-demethyl-7-[(3S)-3-amino-3-carboxypropyl]wyosine(37) in tRNA(Phe) + S-adenosyl-L-methionine = 7-[(3S)-3-amino-3-carboxypropyl]wyosine(37) in tRNA(Phe) + S-adenosyl-L-homocysteine + H(+). Its function is as follows. S-adenosyl-L-methionine-dependent methyltransferase that acts as a component of the wyosine derivatives biosynthesis pathway. Probably methylates N-4 position of wybutosine-86 to produce wybutosine-72. In Methanocaldococcus jannaschii (strain ATCC 43067 / DSM 2661 / JAL-1 / JCM 10045 / NBRC 100440) (Methanococcus jannaschii), this protein is tRNA(Phe) 7-((3-amino-3-carboxypropyl)-4-demethylwyosine(37)-N(4))-methyltransferase.